The sequence spans 152 residues: Ribosomal RNA large subunit methyltransferase H (152 aa).

S-adenosyl-L-methionine contacts are provided by residues Leu-70, Gly-102, and 120–125 (LSPMTF).

Belongs to the RNA methyltransferase RlmH family. In terms of assembly, homodimer.

The protein resides in the cytoplasm. It carries out the reaction pseudouridine(1915) in 23S rRNA + S-adenosyl-L-methionine = N(3)-methylpseudouridine(1915) in 23S rRNA + S-adenosyl-L-homocysteine + H(+). In terms of biological role, specifically methylates the pseudouridine at position 1915 (m3Psi1915) in 23S rRNA. In Pelobacter propionicus (strain DSM 2379 / NBRC 103807 / OttBd1), this protein is Ribosomal RNA large subunit methyltransferase H.